Reading from the N-terminus, the 380-residue chain is Queuine tRNA-ribosyltransferase (380 aa).

Catalysis depends on aspartate 96, which acts as the Proton acceptor. Residues 96 to 100 (DSGGF), aspartate 150, glutamine 193, and glycine 220 each bind substrate. An RNA binding region spans residues 251 to 257 (GVGAPDS). Aspartate 270 serves as the catalytic Nucleophile. The RNA binding; important for wobble base 34 recognition stretch occupies residues 275 to 279 (TRIAR). Zn(2+) contacts are provided by cysteine 308, cysteine 310, cysteine 313, and histidine 339.

It belongs to the queuine tRNA-ribosyltransferase family. In terms of assembly, homodimer. Within each dimer, one monomer is responsible for RNA recognition and catalysis, while the other monomer binds to the replacement base PreQ1. Zn(2+) serves as cofactor.

The enzyme catalyses 7-aminomethyl-7-carbaguanine + guanosine(34) in tRNA = 7-aminomethyl-7-carbaguanosine(34) in tRNA + guanine. It participates in tRNA modification; tRNA-queuosine biosynthesis. Catalyzes the base-exchange of a guanine (G) residue with the queuine precursor 7-aminomethyl-7-deazaguanine (PreQ1) at position 34 (anticodon wobble position) in tRNAs with GU(N) anticodons (tRNA-Asp, -Asn, -His and -Tyr). Catalysis occurs through a double-displacement mechanism. The nucleophile active site attacks the C1' of nucleotide 34 to detach the guanine base from the RNA, forming a covalent enzyme-RNA intermediate. The proton acceptor active site deprotonates the incoming PreQ1, allowing a nucleophilic attack on the C1' of the ribose to form the product. After dissociation, two additional enzymatic reactions on the tRNA convert PreQ1 to queuine (Q), resulting in the hypermodified nucleoside queuosine (7-(((4,5-cis-dihydroxy-2-cyclopenten-1-yl)amino)methyl)-7-deazaguanosine). In Streptococcus sanguinis (strain SK36), this protein is Queuine tRNA-ribosyltransferase.